The following is a 418-amino-acid chain: MTLLALGINHKTAPVSLRERVSFSPDKLDQALDSLLAQPMVQGGVVLSTCNRTELYLSVEEQDNLQEALIRWLCDYHNLNEEDLRKSLYWHQDNDAVSHLMRVASGLDSLVLGEPQILGQVKKAFADSQKGHMKASELERMFQKSFSVAKRVRTETDIGASAVSVAFAACTLARQIFESLSTVTVLLVGAGETIELVARHLREHKVQKMIIANRTRERAQILADEVGAEVIALSEIDERLREADIIISSTASPLPIIGKGMVERALKSRRNQPMLLVDIAVPRDVEPEVGKLANAYLYSVDDLQSIISHNLAQRKAAAVEAETIVAQETSEFMAWLRAQSASETIREYRSQAEQVRDELTAKALAALEQGGDAQAIMQDLAWKLTNRLIHAPTKSLQQAARDGDNERLNILRDSLGLE.

Substrate-binding positions include T49–R52, S109, E114–Q116, and Q120. C50 (nucleophile) is an active-site residue. G189–I194 provides a ligand contact to NADP(+).

The protein belongs to the glutamyl-tRNA reductase family. Homodimer.

It carries out the reaction (S)-4-amino-5-oxopentanoate + tRNA(Glu) + NADP(+) = L-glutamyl-tRNA(Glu) + NADPH + H(+). The protein operates within porphyrin-containing compound metabolism; protoporphyrin-IX biosynthesis; 5-aminolevulinate from L-glutamyl-tRNA(Glu): step 1/2. Functionally, catalyzes the NADPH-dependent reduction of glutamyl-tRNA(Glu) to glutamate 1-semialdehyde (GSA). The protein is Glutamyl-tRNA reductase of Escherichia coli O9:H4 (strain HS).